We begin with the raw amino-acid sequence, 358 residues long: 1-deoxy-D-xylulose 5-phosphate reductoisomerase (358 aa).

NADPH is bound by residues Thr-7, Gly-8, Ser-9, Ile-10, Gly-31, Asn-33, and Asn-114. Lys-115 serves as a coordination point for 1-deoxy-D-xylulose 5-phosphate. Glu-116 lines the NADPH pocket. Asp-134 contacts Mn(2+). 1-deoxy-D-xylulose 5-phosphate-binding residues include Ser-135, Glu-136, Ser-157, and His-180. Glu-136 contributes to the Mn(2+) binding site. Residue Gly-186 participates in NADPH binding. 1-deoxy-D-xylulose 5-phosphate-binding residues include Ser-193, Asn-198, Lys-199, and Glu-202. Glu-202 serves as a coordination point for Mn(2+).

Belongs to the DXR family. Mg(2+) serves as cofactor. Mn(2+) is required as a cofactor.

It carries out the reaction 2-C-methyl-D-erythritol 4-phosphate + NADP(+) = 1-deoxy-D-xylulose 5-phosphate + NADPH + H(+). It functions in the pathway isoprenoid biosynthesis; isopentenyl diphosphate biosynthesis via DXP pathway; isopentenyl diphosphate from 1-deoxy-D-xylulose 5-phosphate: step 1/6. Catalyzes the NADPH-dependent rearrangement and reduction of 1-deoxy-D-xylulose-5-phosphate (DXP) to 2-C-methyl-D-erythritol 4-phosphate (MEP). The protein is 1-deoxy-D-xylulose 5-phosphate reductoisomerase of Wolinella succinogenes (strain ATCC 29543 / DSM 1740 / CCUG 13145 / JCM 31913 / LMG 7466 / NCTC 11488 / FDC 602W) (Vibrio succinogenes).